The primary structure comprises 319 residues: Taste receptor type 2 member 30 (319 aa).

A topological domain (extracellular) is located at residue methionine 1. A helical membrane pass occupies residues 2 to 22 (ITFLPIIFSILIVVIFVIGNF). At 23 to 46 (ANGFIALVNSIEWVKRQKISFADQ) the chain is on the cytoplasmic side. The helical transmembrane segment at 47–67 (ILIALAVSRVGLLWALLLHWY) threads the bilayer. The Extracellular segment spans residues 68–86 (ATELNLAFYSVEVRITAYN). Residues 87–107 (VWAVTNHFSNWLATSLSMFYL) traverse the membrane as a helical segment. Topologically, residues 108 to 126 (LKIANFSNLIFLRIKRRVK) are cytoplasmic. A helical transmembrane segment spans residues 127 to 147 (SVILVILLGPLLFLVCHLFVI). The Extracellular segment spans residues 148–178 (NMNEIVWTKEYEGNLTWKIKLRNAVFLSNMT). N-linked (GlcNAc...) asparagine glycans are attached at residues asparagine 161 and asparagine 176. A helical transmembrane segment spans residues 179–199 (LTMLANFVPLTLTLISFLLLI). The Cytoplasmic segment spans residues 200 to 229 (CSLCKHLKKMQLHGKGSQDPSTKVHIKALQ). The chain crosses the membrane as a helical span at residues 230–250 (TVTCFLLLCAIYFLSMIISVY). The Extracellular segment spans residues 251 to 259 (NFGRLEKKP). The chain crosses the membrane as a helical span at residues 260–280 (VFMFCQAITFSYPSTHAFILI). Residues 281-319 (WGNKKLKQIFLSVLWHVRYWVKDRSLRLHRFTRAALCKG) lie on the Cytoplasmic side of the membrane.

Belongs to the G-protein coupled receptor T2R family.

Its subcellular location is the membrane. Its function is as follows. Receptor that may play a role in the perception of bitterness and is gustducin-linked. May play a role in sensing the chemical composition of the gastrointestinal content. The activity of this receptor may stimulate alpha gustducin, mediate PLC-beta-2 activation and lead to the gating of TRPM5. The polypeptide is Taste receptor type 2 member 30 (TAS2R30) (Pongo pygmaeus (Bornean orangutan)).